The following is a 332-amino-acid chain: Tetraacyldisaccharide 4'-kinase (332 aa).

58–65 is an ATP binding site; sequence TVGGSGKT.

This sequence belongs to the LpxK family.

The catalysed reaction is a lipid A disaccharide + ATP = a lipid IVA + ADP + H(+). It participates in glycolipid biosynthesis; lipid IV(A) biosynthesis; lipid IV(A) from (3R)-3-hydroxytetradecanoyl-[acyl-carrier-protein] and UDP-N-acetyl-alpha-D-glucosamine: step 6/6. Functionally, transfers the gamma-phosphate of ATP to the 4'-position of a tetraacyldisaccharide 1-phosphate intermediate (termed DS-1-P) to form tetraacyldisaccharide 1,4'-bis-phosphate (lipid IVA). The sequence is that of Tetraacyldisaccharide 4'-kinase from Shewanella piezotolerans (strain WP3 / JCM 13877).